The following is a 457-amino-acid chain: COBRA-like protein 3 (457 aa).

Positions M1–E35 are cleaved as a signal peptide. N-linked (GlcNAc...) asparagine glycans are attached at residues N45, N170, N178, N217, N242, N258, N326, N341, and N361. Residue N430 is the site of GPI-anchor amidated asparagine attachment. The propeptide at A431–A457 is removed in mature form. A helical transmembrane segment spans residues Q437–A457.

This sequence belongs to the COBRA family.

Its subcellular location is the cell membrane. Its function is as follows. Involved in determining the orientation of cell expansion, probably by playing an important role in cellulose deposition. May act by recruiting cellulose synthesizing complexes to discrete positions on the cell surface. This is COBRA-like protein 3 (BC1L4) from Oryza sativa subsp. japonica (Rice).